A 150-amino-acid polypeptide reads, in one-letter code: Urease accessory protein UreE (150 aa).

The protein belongs to the UreE family.

It is found in the cytoplasm. Functionally, involved in urease metallocenter assembly. Binds nickel. Probably functions as a nickel donor during metallocenter assembly. The polypeptide is Urease accessory protein UreE (Streptococcus vestibularis).